The following is an 84-amino-acid chain: Beta-defensin 119 (84 aa).

Positions 1–21 are cleaved as a signal peptide; sequence MKLLYLFLAILLAIEEPVISG. 3 disulfide bridges follow: Cys-28–Cys-55, Cys-35–Cys-49, and Cys-39–Cys-56.

Belongs to the beta-defensin family.

It is found in the secreted. In terms of biological role, has antibacterial activity. This Hylobates lar (Lar gibbon) protein is Beta-defensin 119 (DEFB119).